Consider the following 238-residue polypeptide: Ribonuclease 3 (238 aa).

The RNase III domain maps to 9-141 (LIDFMEKIGY…VVAAVYIDGG (133 aa)). Glutamate 54 serves as a coordination point for Mg(2+). Aspartate 58 is an active-site residue. The Mg(2+) site is built by aspartate 127 and glutamate 130. The active site involves glutamate 130. Residues 168–237 (DYKTSLQEIT…ARRAIEKLKG (70 aa)) enclose the DRBM domain.

The protein belongs to the ribonuclease III family. As to quaternary structure, homodimer. Mg(2+) is required as a cofactor.

It localises to the cytoplasm. It carries out the reaction Endonucleolytic cleavage to 5'-phosphomonoester.. In terms of biological role, digests double-stranded RNA. Involved in the processing of primary rRNA transcript to yield the immediate precursors to the large and small rRNAs (23S and 16S). Processes some mRNAs, and tRNAs when they are encoded in the rRNA operon. Processes pre-crRNA and tracrRNA of type II CRISPR loci if present in the organism. In Pseudothermotoga lettingae (strain ATCC BAA-301 / DSM 14385 / NBRC 107922 / TMO) (Thermotoga lettingae), this protein is Ribonuclease 3.